Consider the following 321-residue polypeptide: tRNA(Ile)-lysidine synthase (321 aa).

An ATP-binding site is contributed by 20–25; that stretch reads SGGADS.

This sequence belongs to the tRNA(Ile)-lysidine synthase family.

It localises to the cytoplasm. It carries out the reaction cytidine(34) in tRNA(Ile2) + L-lysine + ATP = lysidine(34) in tRNA(Ile2) + AMP + diphosphate + H(+). Its function is as follows. Ligates lysine onto the cytidine present at position 34 of the AUA codon-specific tRNA(Ile) that contains the anticodon CAU, in an ATP-dependent manner. Cytidine is converted to lysidine, thus changing the amino acid specificity of the tRNA from methionine to isoleucine. The protein is tRNA(Ile)-lysidine synthase of Bordetella pertussis (strain Tohama I / ATCC BAA-589 / NCTC 13251).